A 1334-amino-acid chain; its full sequence is SCAR-like protein 2 (1334 aa).

Basic and acidic residues predominate over residues 197-207 (KTGNFQREKKS). Disordered regions lie at residues 197–281 (KTGN…SSFS), 294–331 (DTKP…GTSA), 481–516 (PDSS…ADAP), 568–602 (PNQS…SSYT), 643–668 (DKPT…TVES), 791–832 (STSH…KNII), 931–956 (FEKK…YSEK), 1000–1026 (FQLL…GRSY), 1248–1268 (SGQQ…DTKN), and 1280–1304 (RSKT…TANS). Polar residues predominate over residues 241-256 (VQLTSRHFATPSTDGR). Residues 310–319 (SNNNLHKLSN) are compositionally biased toward low complexity. Polar residues predominate over residues 320–330 (TPLHTRLNGTS). Positions 574–595 (DSKEIPDSKAEDAPIDSPEKLE) are enriched in basic and acidic residues. Residues 791–823 (STSHSSETNQSTVRTPDTVIGQTEGSTGCSTSF) are compositionally biased toward polar residues. Positions 945 to 956 (SSLFSSSHYSEK) are enriched in low complexity. Residues 1248 to 1260 (SGQQKLNGHEKSK) are compositionally biased toward basic and acidic residues. The region spanning 1271-1289 (EREELLQQIRSKTFNLRRT) is the WH2 domain. Low complexity predominate over residues 1289–1304 (TNASKTNTSSPTTANS).

It belongs to the SCAR/WAVE family.

Its subcellular location is the cytoplasm. The protein resides in the cytoskeleton. Involved in regulation of actin and microtubule organization. Part of a WAVE complex that activates the Arp2/3 complex. This chain is SCAR-like protein 2, found in Oryza sativa subsp. japonica (Rice).